Here is a 260-residue protein sequence, read N- to C-terminus: Voltage-dependent calcium channel gamma-6 subunit (260 aa).

4 helical membrane-spanning segments follow: residues 43 to 63 (LLVAIVGATLAVLAVGTEFWV), 143 to 163 (VIAVLGLTAMALGCLCVIMVL), 169 to 189 (FLLRLGAVCFGLSGLLLFVSL), and 221 to 241 (LGCGVGAGLILLLGGVCFLLL).

The protein belongs to the PMP-22/EMP/MP20 family. CACNG subfamily. In terms of assembly, interacts with CACNA1C. Identified in a complex with the L-type calcium channel subunits CACNA1C, CACNA2D1 and either CACNB1 or CACNB2. Detected in heart atrium and ventricle, aorta and skeletal muscle. Detected in heart left ventricle.

The protein localises to the cell membrane. Functionally, regulates the activity of L-type calcium channels that contain CACNA1C as pore-forming subunit. The chain is Voltage-dependent calcium channel gamma-6 subunit (Cacng6) from Rattus norvegicus (Rat).